The following is a 258-amino-acid chain: Granzyme A (258 aa).

Positions 1 to 26 are cleaved as a signal peptide; sequence MNIPFPFSFPPAICLLLIPGVFPVSC. The propeptide at 27-28 is activation peptide; sequence EG. Residues 29–255 form the Peptidase S1 domain; sequence IIGGNEVAPH…HLNWIKKTIA (227 aa). C52 and C68 are joined by a disulfide. Residues H67 and D112 each act as charge relay system in the active site. 3 disulfide bridges follow: C146-C217, C178-C196, and C207-C230. N169 is a glycosylation site (N-linked (GlcNAc...) asparagine). Residue S211 is the Charge relay system of the active site.

The protein belongs to the peptidase S1 family. Granzyme subfamily. As to quaternary structure, homodimer; disulfide-linked. Interacts with APEX1.

It localises to the secreted. The protein resides in the cytoplasmic granule. The enzyme catalyses Hydrolysis of proteins, including fibronectin, type IV collagen and nucleolin. Preferential cleavage: -Arg-|-Xaa-, -Lys-|-Xaa- &gt;&gt; -Phe-|-Xaa- in small molecule substrates.. Its function is as follows. Abundant protease in the cytosolic granules of cytotoxic T-cells and NK-cells which activates caspase-independent pyroptosis when delivered into the target cell through the immunological synapse. It cleaves after Lys or Arg. Cleaves APEX1 after 'Lys-31' and destroys its oxidative repair activity. Cleaves the nucleosome assembly protein SET after 'Lys-189', which disrupts its nucleosome assembly activity and allows the SET complex to translocate into the nucleus to nick and degrade the DNA. This Bos taurus (Bovine) protein is Granzyme A (GZMA).